The primary structure comprises 266 residues: Putative carbamate hydrolase RutD (266 aa).

It belongs to the AB hydrolase superfamily. Hydrolase RutD family.

The enzyme catalyses carbamate + 2 H(+) = NH4(+) + CO2. Involved in pyrimidine catabolism. May facilitate the hydrolysis of carbamate, a reaction that can also occur spontaneously. This Enterobacter cloacae subsp. cloacae (strain ATCC 13047 / DSM 30054 / NBRC 13535 / NCTC 10005 / WDCM 00083 / NCDC 279-56) protein is Putative carbamate hydrolase RutD.